The sequence spans 260 residues: Protein PET122, mitochondrial (260 aa).

The transit peptide at 1-8 (MLSITRRL) directs the protein to the mitochondrion.

The protein localises to the mitochondrion inner membrane. Its function is as follows. Required for expression of the mitochondrial gene for cytochrome c oxidase subunit 3 (COX3). PET122 seems to work by directly interacting with the small ribosomal subunit to promote translation initiation on the COX3 mRNA. This is Protein PET122, mitochondrial (PET122) from Saccharomyces bayanus (Yeast).